We begin with the raw amino-acid sequence, 106 residues long: Thiosulfate sulfurtransferase GlpE (106 aa).

The 89-residue stretch at 17-105 (EQSEAKLVDI…WQRAELPIVR (89 aa)) folds into the Rhodanese domain. Cys-65 serves as the catalytic Cysteine persulfide intermediate.

It belongs to the GlpE family.

It is found in the cytoplasm. It catalyses the reaction thiosulfate + hydrogen cyanide = thiocyanate + sulfite + 2 H(+). The enzyme catalyses thiosulfate + [thioredoxin]-dithiol = [thioredoxin]-disulfide + hydrogen sulfide + sulfite + 2 H(+). Its function is as follows. Transferase that catalyzes the transfer of sulfur from thiosulfate to thiophilic acceptors such as cyanide or dithiols. May function in a CysM-independent thiosulfate assimilation pathway by catalyzing the conversion of thiosulfate to sulfite, which can then be used for L-cysteine biosynthesis. This chain is Thiosulfate sulfurtransferase GlpE, found in Vibrio campbellii (strain ATCC BAA-1116).